A 264-amino-acid chain; its full sequence is Hydroxyethylthiazole kinase (264 aa).

A substrate-binding site is contributed by Met-47. 2 residues coordinate ATP: Arg-123 and Ser-169. Gly-196 serves as a coordination point for substrate.

The protein belongs to the Thz kinase family. Requires Mg(2+) as cofactor.

The enzyme catalyses 5-(2-hydroxyethyl)-4-methylthiazole + ATP = 4-methyl-5-(2-phosphooxyethyl)-thiazole + ADP + H(+). It functions in the pathway cofactor biosynthesis; thiamine diphosphate biosynthesis; 4-methyl-5-(2-phosphoethyl)-thiazole from 5-(2-hydroxyethyl)-4-methylthiazole: step 1/1. In terms of biological role, catalyzes the phosphorylation of the hydroxyl group of 4-methyl-5-beta-hydroxyethylthiazole (THZ). The protein is Hydroxyethylthiazole kinase of Brachyspira hyodysenteriae (strain ATCC 49526 / WA1).